A 349-amino-acid polypeptide reads, in one-letter code: UDP-N-acetylenolpyruvoylglucosamine reductase (349 aa).

The FAD-binding PCMH-type domain maps to 25–197 (GIDARARYAA…VSVTFRLPKR (173 aa)). The active site involves Arg-173. Residue Ser-249 is the Proton donor of the active site. The active site involves Glu-345.

It belongs to the MurB family. The cofactor is FAD.

Its subcellular location is the cytoplasm. The catalysed reaction is UDP-N-acetyl-alpha-D-muramate + NADP(+) = UDP-N-acetyl-3-O-(1-carboxyvinyl)-alpha-D-glucosamine + NADPH + H(+). It functions in the pathway cell wall biogenesis; peptidoglycan biosynthesis. In terms of biological role, cell wall formation. This chain is UDP-N-acetylenolpyruvoylglucosamine reductase, found in Burkholderia multivorans (strain ATCC 17616 / 249).